The primary structure comprises 694 residues: MAYLLSFGIVAALFLASISLYRYGNIPRQHILVTLSVLTAWCFSFLIVFTIPLDVTSTLYRQCVEEHRPTPAPNVTNTSSATVGPPPQCQEPWGMVPASVFPNLWRIIYWSSQFLTWLIMPLMQSYLKAGDFTVKGKLKSALIENAIYYGSYLFICGVLLIYIAVKGESLDWQKLKAIASSASNTWGLFLLILLLGYALVEVPRSLWNNAKPGFALQYAYFKAAKLSTEKAEAEEHVDDILESLQGLSRVIPNNHELRPCLETILRKVPIELQERASRNFARTGGSGMGATSSTILPSEKALVRIHKQVIKSLQTLQRTEALWSVQVQTVLHLEDVAKNIHSSDRRFKSEFPRQRTQLERICYSASLQWYWECLLKAPFLKTMCVLTATMSAMVVWSELTFFSRHPVLSIFANVIYVAKESYDFFTIEVFSMVVLCYFFYCTYSTILRIRFLNLYYLAPHHQTNEHSLIFSGMLLCRLTPPMCLNFLGLIHMDTHIIPNRIMETVYTQIMGHMDVIGIISNGFNIYFPMCMLAFCLATWFSLGSRALNALGFQQFLQNETIATELVQEGKDLIAREKRRRQRAEEAMARRRDFNRTDQVLGSDYLSKYRSGGPGGLTSSRTPADGLLRDGDGSFDYAAVASSSALGVPRSLSEEINDRFGVSTQVQVGFRDPDYEAETDGRIVGPPPRGLFDDV.

The Extracellular portion of the chain corresponds to 1-3 (MAY). A helical transmembrane segment spans residues 4–26 (LLSFGIVAALFLASISLYRYGNI). The Cytoplasmic portion of the chain corresponds to 27-30 (PRQH). A helical membrane pass occupies residues 31 to 51 (ILVTLSVLTAWCFSFLIVFTI). Residues 52 to 106 (PLDVTSTLYRQCVEEHRPTPAPNVTNTSSATVGPPPQCQEPWGMVPASVFPNLWR) lie on the Extracellular side of the membrane. Asn74 and Asn77 each carry an N-linked (GlcNAc...) asparagine glycan. The chain crosses the membrane as a helical span at residues 107–127 (IIYWSSQFLTWLIMPLMQSYL). The Cytoplasmic segment spans residues 128–144 (KAGDFTVKGKLKSALIE). The chain crosses the membrane as a helical span at residues 145–165 (NAIYYGSYLFICGVLLIYIAV). Topologically, residues 166–181 (KGESLDWQKLKAIASS) are extracellular. Residues 182-202 (ASNTWGLFLLILLLGYALVEV) form a helical membrane-spanning segment. Topologically, residues 203–381 (PRSLWNNAKP…ECLLKAPFLK (179 aa)) are cytoplasmic. Positions 222-249 (KAAKLSTEKAEAEEHVDDILESLQGLSR) form a coiled coil. The helical transmembrane segment at 382–402 (TMCVLTATMSAMVVWSELTFF) threads the bilayer. The Extracellular portion of the chain corresponds to 403–426 (SRHPVLSIFANVIYVAKESYDFFT). The helical transmembrane segment at 427-447 (IEVFSMVVLCYFFYCTYSTIL) threads the bilayer. At 448–467 (RIRFLNLYYLAPHHQTNEHS) the chain is on the cytoplasmic side. The helical transmembrane segment at 468-488 (LIFSGMLLCRLTPPMCLNFLG) threads the bilayer. Topologically, residues 489–514 (LIHMDTHIIPNRIMETVYTQIMGHMD) are extracellular. Residues 515–535 (VIGIISNGFNIYFPMCMLAFC) form a helical membrane-spanning segment. Over 536–694 (LATWFSLGSR…PPPRGLFDDV (159 aa)) the chain is Cytoplasmic. The stretch at 564 to 592 (ELVQEGKDLIAREKRRRQRAEEAMARRRD) forms a coiled coil. The tract at residues 673-694 (DYEAETDGRIVGPPPRGLFDDV) is disordered.

It belongs to the LIMR family.

The protein resides in the membrane. The polypeptide is LMBR1 domain-containing protein 2 homolog (Drosophila melanogaster (Fruit fly)).